The primary structure comprises 394 residues: MKRNPHFVSLTKNYLFADLQKRVAQFRLENPQHTVINLSIGDTTQPLNASVAEAFASSIARLSSPTTCRGYGPDFGLPALRQKLSEDFYRGCVDAKEIFISDGAKADLFRLLSFFGPNQTVAIQDPSYPAYLDIARLTGAKEIIALPCLQENAFFPEFPEDTHIDILCLCSPNNPTGTVLNKDQLRAIVHYAIEHEILILFDAAYSTFISDPSLPKSIFEIPDARFCAIEINSFSKPLGFAGIRLGWTVIPQELTYADGHFVIQDWERFLSTTFNGASIPAQEAGVAGLSILPQLEAIHYYRENSDLLRKALLATGFEVFGGEHAPYLWVKPTQANISDRDLFDFFLREYHIAITPGIGFGRSGSGFVRFSSLGKREDILAACERLQMAPALQS.

2 residues coordinate substrate: Tyr14 and Gly41. Residues Tyr71, 104-105 (AK), Tyr128, Asn174, Tyr205, and 233-235 (SFS) each bind pyridoxal 5'-phosphate. Substrate is bound by residues Lys105, Tyr128, and Asn174. Lys236 carries the post-translational modification N6-(pyridoxal phosphate)lysine. Positions 244 and 275 each coordinate pyridoxal 5'-phosphate. Residues Asn275 and Arg369 each coordinate substrate.

This sequence belongs to the class-I pyridoxal-phosphate-dependent aminotransferase family. LL-diaminopimelate aminotransferase subfamily. Homodimer. Pyridoxal 5'-phosphate is required as a cofactor.

The catalysed reaction is (2S,6S)-2,6-diaminopimelate + 2-oxoglutarate = (S)-2,3,4,5-tetrahydrodipicolinate + L-glutamate + H2O + H(+). It functions in the pathway amino-acid biosynthesis; L-lysine biosynthesis via DAP pathway; LL-2,6-diaminopimelate from (S)-tetrahydrodipicolinate (aminotransferase route): step 1/1. Its function is as follows. Involved in the synthesis of meso-diaminopimelate (m-DAP or DL-DAP), required for both lysine and peptidoglycan biosynthesis. Catalyzes the direct conversion of tetrahydrodipicolinate to LL-diaminopimelate. This Chlamydia trachomatis serovar L2b (strain UCH-1/proctitis) protein is LL-diaminopimelate aminotransferase.